Consider the following 510-residue polypeptide: Maturase K (510 aa).

The protein belongs to the intron maturase 2 family. MatK subfamily.

Its subcellular location is the plastid. It localises to the chloroplast. Usually encoded in the trnK tRNA gene intron. Probably assists in splicing its own and other chloroplast group II introns. The polypeptide is Maturase K (Populus nigra (Lombardy poplar)).